A 507-amino-acid polypeptide reads, in one-letter code: uncharacterized protein (507 aa).

14 consecutive transmembrane segments (helical) span residues 8–28 (VKGVSWHLLSYFLAAPIAYLV), 41–61 (VGLFYAVLDFFSMLVVFRAFG), 86–106 (IVFVGILQTILAFIVAFLVVI), 130–150 (INILIIMAMGYYFLDSIVAFF), 171–191 (ILSVFIFSLIFIYLFNVHNAY), 193–213 (PSVSYLLMAVVMIIIYGYIVV), 235–255 (LFSYGMYVMIGYAGSLILGYL), 275–295 (VAMPTVNILSYFAFSVGAVLF), 323–343 (IIVTPLAILMAYFPTVIINIL), 355–375 (IQILSFGAMFLTFNSIGFNIL), 387–407 (ILYIGASFNLIFNILLIPKFG), 408–428 (IIGAAITTVFGYFIMWIFQIW), 444–464 (ILVILVGIFSLIPVMFIKDLI), and 467–487 (VILQLFVCGVVYFGIYILGIF).

The protein belongs to the polysaccharide synthase family.

The protein localises to the cell membrane. This is an uncharacterized protein from Methanocaldococcus jannaschii (strain ATCC 43067 / DSM 2661 / JAL-1 / JCM 10045 / NBRC 100440) (Methanococcus jannaschii).